Here is a 285-residue protein sequence, read N- to C-terminus: MDIISKSGEGNKYTINSAIAFVAYASHIDINTTEFSKVLSGLRDFINDEAIRLGGKISDGSFNKCNGDWYEWLIGIRAIEFFLESETNFIVVKMPNATSFDVMSIYKSCLSEFIYDLRSKLSLNNVNLITSNPDFSIIDIRGRREELKSMLKDISFSNISLSTISEIDNLYKNFIDYAELEHIKSFLSVKTTFRPDRRLQLAHEGSLMKALYTHLQTRTWTINPTGIRYYAAATSIGNADVIGLKTVATHSITDVKSLPQSAVDEIFKINSVLDVDSCLSHILSS.

Residues Asp134 and Glu204 each coordinate Mg(2+).

Homodimer. The cofactor is Mg(2+).

The catalysed reaction is Endonucleolytic cleavage of DNA to give specific double-stranded fragments with terminal 5'-phosphates.. An F and P subtype restriction enzyme that recognizes the double-stranded sequence 5'-RCCGGY-3' and cleaves after R-1. This chain is Type II restriction enzyme Cfr10I (cfr10IR), found in Citrobacter freundii.